The primary structure comprises 400 residues: Argininosuccinate synthase (400 aa).

An ATP-binding site is contributed by 9 to 17 (AYSGGLDTS). Tyr87 contributes to the L-citrulline binding site. Gly117 lines the ATP pocket. The L-aspartate site is built by Thr119, Asn123, and Asp124. Asn123 contacts L-citrulline. Positions 127, 176, 185, 261, and 273 each coordinate L-citrulline.

The protein belongs to the argininosuccinate synthase family. Type 1 subfamily. Homotetramer.

Its subcellular location is the cytoplasm. It carries out the reaction L-citrulline + L-aspartate + ATP = 2-(N(omega)-L-arginino)succinate + AMP + diphosphate + H(+). It participates in amino-acid biosynthesis; L-arginine biosynthesis; L-arginine from L-ornithine and carbamoyl phosphate: step 2/3. The polypeptide is Argininosuccinate synthase (Chlorobium limicola (strain DSM 245 / NBRC 103803 / 6330)).